A 196-amino-acid polypeptide reads, in one-letter code: ATP-dependent Clp protease proteolytic subunit (196 aa).

Ser96 functions as the Nucleophile in the catalytic mechanism. His121 is an active-site residue.

Belongs to the peptidase S14 family. In terms of assembly, fourteen ClpP subunits assemble into 2 heptameric rings which stack back to back to give a disk-like structure with a central cavity, resembling the structure of eukaryotic proteasomes.

The protein localises to the cytoplasm. The enzyme catalyses Hydrolysis of proteins to small peptides in the presence of ATP and magnesium. alpha-casein is the usual test substrate. In the absence of ATP, only oligopeptides shorter than five residues are hydrolyzed (such as succinyl-Leu-Tyr-|-NHMec, and Leu-Tyr-Leu-|-Tyr-Trp, in which cleavage of the -Tyr-|-Leu- and -Tyr-|-Trp bonds also occurs).. Functionally, cleaves peptides in various proteins in a process that requires ATP hydrolysis. Has a chymotrypsin-like activity. Plays a major role in the degradation of misfolded proteins. In Streptococcus gordonii (strain Challis / ATCC 35105 / BCRC 15272 / CH1 / DL1 / V288), this protein is ATP-dependent Clp protease proteolytic subunit.